The chain runs to 93 residues: Putative pterin-4-alpha-carbinolamine dehydratase (93 aa).

Belongs to the pterin-4-alpha-carbinolamine dehydratase family.

It carries out the reaction (4aS,6R)-4a-hydroxy-L-erythro-5,6,7,8-tetrahydrobiopterin = (6R)-L-erythro-6,7-dihydrobiopterin + H2O. This Mycolicibacterium vanbaalenii (strain DSM 7251 / JCM 13017 / BCRC 16820 / KCTC 9966 / NRRL B-24157 / PYR-1) (Mycobacterium vanbaalenii) protein is Putative pterin-4-alpha-carbinolamine dehydratase.